A 364-amino-acid polypeptide reads, in one-letter code: Geissoschizine synthase (364 aa).

The region spanning G24–I343 is the Enoyl reductase (ER) domain. C51 provides a ligand contact to Zn(2+). Position 52 (N52) interacts with NADP(+). Residues H73, E74, C104, C107, C110, C118, and C168 each coordinate Zn(2+). Residues L194, G196, L197, S216, T217, S218, K221, R261, V280, A282, S304, T306, and R351 each contribute to the NADP(+) site.

This sequence belongs to the zinc-containing alcohol dehydrogenase family. Class-III subfamily. As to quaternary structure, homodimer. Zn(2+) serves as cofactor.

It carries out the reaction (19E)-geissoschizine + NADP(+) = 4,21-dehydrogeissoschizine + NADPH. The enzyme catalyses (19E)-geissoschizine + NADPH + H(+) = (16R,19E)-isositsirikine + NADP(+). It catalyses the reaction (19E)-geissoschizine + NADPH + H(+) = (16R,19Z)-isositsirikine + NADP(+). The protein operates within alkaloid biosynthesis. Functionally, an alcohol dehydrogenase involved in the biosynthesis of seco-iridoid and derivatives monoterpenoid indole alkaloids natural products. Catalyzes the production of geissoschizine and its conversion to (16R)-E-isositsirikine and (16R)-Z-isositsirikine. The polypeptide is Geissoschizine synthase (Alstonia scholaris (Dogbane)).